The sequence spans 227 residues: Ribonuclease 3 (227 aa).

The region spanning 3-130 (TNAISKIIKY…LIGAIYLDGG (128 aa)) is the RNase III domain. Position 43 (glutamate 43) interacts with Mg(2+). Aspartate 47 is a catalytic residue. 2 residues coordinate Mg(2+): asparagine 116 and glutamate 119. Glutamate 119 is a catalytic residue. Positions 155–224 (DAKTILQEWA…ASLMLAKINY (70 aa)) constitute a DRBM domain.

This sequence belongs to the ribonuclease III family. In terms of assembly, homodimer. Mg(2+) is required as a cofactor.

The protein localises to the cytoplasm. The catalysed reaction is Endonucleolytic cleavage to 5'-phosphomonoester.. In terms of biological role, digests double-stranded RNA. Involved in the processing of primary rRNA transcript to yield the immediate precursors to the large and small rRNAs (23S and 16S). Processes some mRNAs, and tRNAs when they are encoded in the rRNA operon. Processes pre-crRNA and tracrRNA of type II CRISPR loci if present in the organism. In Ehrlichia ruminantium (strain Welgevonden), this protein is Ribonuclease 3.